A 1335-amino-acid chain; its full sequence is Restriction of telomere capping protein 1 (1335 aa).

Residues 1–39 (MSLSPHVENASIPKGSTPIPKNRNVSSIGKGEFLGSSSS) are disordered. 6 WD repeats span residues 207–248 (NKFS…SIDN), 256–296 (EHTR…SKSS), 305–342 (TASD…YKFA), 367–406 (AHTG…NAAE), 439–486 (NTGY…IPKH), and 489–527 (LSET…TVLE). Disordered stretches follow at residues 559-593 (PELQ…IGGI), 600-619 (TGLT…GPTF), 630-651 (ASSF…ENRE), 736-758 (KNAT…DDDD), and 783-824 (NEKV…DRSR). Positions 630 to 644 (ASSFNSSSASLTSLT) are enriched in low complexity. Residues 808-817 (SSISSISASR) show a composition bias toward low complexity. The stretch at 844 to 884 (LISIATHNASVYLSIDDLTNFKIWILIRDSLLWDLKWMTSS) is one WD 7 repeat. Disordered stretches follow at residues 935–956 (AFRA…KLKE) and 1007–1037 (DEHE…KSIP). Basic and acidic residues-rich tracts occupy residues 945–956 (DAEKKPVSKLKE) and 1009–1021 (HEHQ…HDSP). S1030, S1074, S1081, S1083, S1117, and S1127 each carry phosphoserine. 2 WD repeats span residues 1130-1170 (REQL…TETG) and 1217-1256 (VLKY…KEKL). The RING-type; degenerate zinc-finger motif lies at 1294–1335 (LKKLTMVILPCGHEGHFQCIQEWFLDENEQECPGGCPGVAFI).

This sequence belongs to the WD repeat RTC1 family.

The protein resides in the vacuole. May be involved in a process influencing telomere capping. This chain is Restriction of telomere capping protein 1 (RTC1), found in Saccharomyces cerevisiae (strain YJM789) (Baker's yeast).